A 103-amino-acid polypeptide reads, in one-letter code: Host transcription reprogramming factor 6 (103 aa).

The signal sequence occupies residues Met1–Ala19. The segment at Tyr66–His92 adopts a C2H2-type zinc-finger fold. Residues Glu82–Gln103 form a disordered region.

Its subcellular location is the secreted. The protein resides in the host nucleus. Probable secreted effector that translocates into the nuclei of host cells to reprogram the expression of targeted genes by binding on effector binding elements in rice. The protein is Host transcription reprogramming factor 6 of Pyricularia oryzae (strain 70-15 / ATCC MYA-4617 / FGSC 8958) (Rice blast fungus).